Reading from the N-terminus, the 208-residue chain is Cysteine-rich protein 2 (208 aa).

In terms of domain architecture, LIM zinc-binding 1 spans Cys5–Cys57. Lys23 carries the N6-acetyllysine modification. Positions Thr98–Thr117 are disordered. Ser104 bears the Phosphoserine mark. Residues Ser104–Ser115 are compositionally biased toward low complexity. One can recognise an LIM zinc-binding 2 domain in the interval Cys126 to Cys178. N6-acetyllysine is present on residues Lys138 and Lys144.

As to quaternary structure, interacts with TGFB1I1.

In Bos taurus (Bovine), this protein is Cysteine-rich protein 2 (CRIP2).